The primary structure comprises 161 residues: MVIEWGTALYQLLAFAVLLLILSKFALKPLLGVMQKRQDMINEQIDSAEQNRKEAEKLLAEQREEMQKARVEARELIENAKKAGEQQGQEMVRAAKEEAQRIHQQALAEIQNEKDQAVAALREQVASLSVLIAQKVIEKELDASEQDQLVQEYLKQASEEL.

Residues 2–22 (VIEWGTALYQLLAFAVLLLIL) traverse the membrane as a helical segment.

Belongs to the ATPase B chain family. As to quaternary structure, F-type ATPases have 2 components, F(1) - the catalytic core - and F(0) - the membrane proton channel. F(1) has five subunits: alpha(3), beta(3), gamma(1), delta(1), epsilon(1). F(0) has three main subunits: a(1), b(2) and c(10-14). The alpha and beta chains form an alternating ring which encloses part of the gamma chain. F(1) is attached to F(0) by a central stalk formed by the gamma and epsilon chains, while a peripheral stalk is formed by the delta and b chains.

Its subcellular location is the cell membrane. F(1)F(0) ATP synthase produces ATP from ADP in the presence of a proton or sodium gradient. F-type ATPases consist of two structural domains, F(1) containing the extramembraneous catalytic core and F(0) containing the membrane proton channel, linked together by a central stalk and a peripheral stalk. During catalysis, ATP synthesis in the catalytic domain of F(1) is coupled via a rotary mechanism of the central stalk subunits to proton translocation. Functionally, component of the F(0) channel, it forms part of the peripheral stalk, linking F(1) to F(0). This is ATP synthase subunit b from Shouchella clausii (strain KSM-K16) (Alkalihalobacillus clausii).